We begin with the raw amino-acid sequence, 491 residues long: Probable allantoate deiminase (491 aa).

A signal peptide spans M1 to G32. N109 carries N-linked (GlcNAc...) asparagine glycosylation. The Mn(2+) site is built by H120, D131, E168, and H234. N-linked (GlcNAc...) asparagine glycans are attached at residues N265 and N343. H454 is a binding site for Mn(2+).

It belongs to the peptidase M20A family. As to quaternary structure, homodimer. It depends on Mn(2+) as a cofactor.

It is found in the endoplasmic reticulum. It catalyses the reaction allantoate + H2O + 2 H(+) = (S)-2-ureidoglycine + NH4(+) + CO2. Its function is as follows. Involved in the catabolism of purine nucleotides. The sequential activity of AAH, UGLYAH and UAH allows a complete purine breakdown without the intermediate generation of urea. The sequence is that of Probable allantoate deiminase from Oryza sativa subsp. japonica (Rice).